We begin with the raw amino-acid sequence, 184 residues long: ATP synthase subunit b, chloroplastic (184 aa).

The helical transmembrane segment at 26–48 (ILATNLINLSVVLGVLIFFGKGV) threads the bilayer.

This sequence belongs to the ATPase B chain family. F-type ATPases have 2 components, F(1) - the catalytic core - and F(0) - the membrane proton channel. F(1) has five subunits: alpha(3), beta(3), gamma(1), delta(1), epsilon(1). F(0) has four main subunits: a(1), b(1), b'(1) and c(10-14). The alpha and beta chains form an alternating ring which encloses part of the gamma chain. F(1) is attached to F(0) by a central stalk formed by the gamma and epsilon chains, while a peripheral stalk is formed by the delta, b and b' chains.

Its subcellular location is the plastid. It is found in the chloroplast thylakoid membrane. In terms of biological role, f(1)F(0) ATP synthase produces ATP from ADP in the presence of a proton or sodium gradient. F-type ATPases consist of two structural domains, F(1) containing the extramembraneous catalytic core and F(0) containing the membrane proton channel, linked together by a central stalk and a peripheral stalk. During catalysis, ATP synthesis in the catalytic domain of F(1) is coupled via a rotary mechanism of the central stalk subunits to proton translocation. Functionally, component of the F(0) channel, it forms part of the peripheral stalk, linking F(1) to F(0). This chain is ATP synthase subunit b, chloroplastic, found in Acorus calamus (Sweet flag).